Reading from the N-terminus, the 24-residue chain is Small ribosomal subunit protein uS19c (24 aa).

Belongs to the universal ribosomal protein uS19 family.

The protein localises to the plastid. It is found in the chloroplast. Protein S19 forms a complex with S13 that binds strongly to the 16S ribosomal RNA. The protein is Small ribosomal subunit protein uS19c (rps19) of Petunia hybrida (Petunia).